Consider the following 318-residue polypeptide: MIKKRNTTKISVIGAGSVGATTAYALMLSGVATEIVLVDVNKSKTEGEAMDLSHGADFVKPVNILSGDYKDTEGSDIVVITAGAAQKVGETRLQLINKNINIFKSIIPQVVKYNKDAILLVVSNPVDVLSYVTYKLSGFPKERVIGSGTVLDTSRLKHEIGKRYKIDPRNVNTYIMGEHGDSEIATWSVTNIQNIKIDEYANKENLEYNDNFRKEVYENVKNAAYEVINRKGATFYAIALAVTRIVKAILGDEKTILPVSTLVENYYGIKDVYLGMPCIVGGSGIEKALSIDLNKTEASKLVKSAETLKNTLNNASCL.

NAD(+) contacts are provided by residues Val18, Asp39, Lys44, Tyr69, and 83 to 84; that span reads GA. Residues Gln86 and Arg92 each coordinate substrate. NAD(+) contacts are provided by residues Ser105, 122 to 124, and Ser147; that span reads VSN. 124-127 lines the substrate pocket; sequence NPVD. Residue 152 to 155 participates in substrate binding; that stretch reads DTSR. Catalysis depends on His179, which acts as the Proton acceptor. Tyr225 carries the post-translational modification Phosphotyrosine. Thr234 contributes to the substrate binding site.

The protein belongs to the LDH/MDH superfamily. LDH family. In terms of assembly, homotetramer.

It localises to the cytoplasm. The enzyme catalyses (S)-lactate + NAD(+) = pyruvate + NADH + H(+). It participates in fermentation; pyruvate fermentation to lactate; (S)-lactate from pyruvate: step 1/1. Functionally, catalyzes the conversion of lactate to pyruvate. In Clostridium botulinum (strain ATCC 19397 / Type A), this protein is L-lactate dehydrogenase.